The chain runs to 574 residues: Isocitrate dehydrogenase kinase/phosphatase (574 aa).

ATP-binding positions include 315 to 321 (APGIRGM) and Lys-336. Asp-371 is an active-site residue.

Belongs to the AceK family.

Its subcellular location is the cytoplasm. The catalysed reaction is L-seryl-[isocitrate dehydrogenase] + ATP = O-phospho-L-seryl-[isocitrate dehydrogenase] + ADP + H(+). Its function is as follows. Bifunctional enzyme which can phosphorylate or dephosphorylate isocitrate dehydrogenase (IDH) on a specific serine residue. This is a regulatory mechanism which enables bacteria to bypass the Krebs cycle via the glyoxylate shunt in response to the source of carbon. When bacteria are grown on glucose, IDH is fully active and unphosphorylated, but when grown on acetate or ethanol, the activity of IDH declines drastically concomitant with its phosphorylation. This is Isocitrate dehydrogenase kinase/phosphatase from Escherichia coli (strain SMS-3-5 / SECEC).